Here is a 244-residue protein sequence, read N- to C-terminus: tRNA (guanine-N(1)-)-methyltransferase (244 aa).

S-adenosyl-L-methionine-binding positions include glycine 113 and 133–138 (IGDYVL).

The protein belongs to the RNA methyltransferase TrmD family. As to quaternary structure, homodimer.

It is found in the cytoplasm. The catalysed reaction is guanosine(37) in tRNA + S-adenosyl-L-methionine = N(1)-methylguanosine(37) in tRNA + S-adenosyl-L-homocysteine + H(+). In terms of biological role, specifically methylates guanosine-37 in various tRNAs. The chain is tRNA (guanine-N(1)-)-methyltransferase from Bacillus cereus (strain G9842).